The following is a 554-amino-acid chain: MPTINVNKVDLERLSNISLSDKLIEDRFPMMGVEVEEIFEEVDKNGKKQNMVQFSINPDRPDYLSVEGLARGFRGFMGITTGIQEFEVLDSDIKVTVEENETRPYVAFALVKNVLMDEFVLESMINLQEKLHWAIGRDRKKLAIGIHDFDKVKAPFTYKEIKGDEIKFVPLGYEDEEMTPREIIEKHEKGIKYAHLIQNDKFPIILDANGEVLSLPPIINGTLTKVTPTSKNLLIDITGTEKEAVEETLNIIVCALVERRGTIVSVNVNGKKYPDLTPKSRIISVESINKKLGLNLNPGEIIQALKKSGMDALYEDGNLIVKIPAYRNDILQNVDLKEEIAINYGYEKFDGKLPSVATTGSKDPVEKKCSAMSDLMIGLGFYEVMNLTLSNQDTLFEKMNLKVDEKDYIEVLKPASIEHRVLRTSILPLLLETLYINKHNALPQKIFEVGDCVVIDEEDTETDTKCKNIKKIAGAITHPLTNFNEIKSSTEALLREFFEGFEFENYEHPAFIPGRCAKILKSGKEVGFFGEIHPEVILNFELEHPVVGFEITIE.

One can recognise a B5 domain in the interval 276–351; that stretch reads LTPKSRIISV…INYGYEKFDG (76 aa). Mg(2+) is bound by residues Asp-329, Asp-335, Glu-338, and Glu-339.

The protein belongs to the phenylalanyl-tRNA synthetase beta subunit family. Type 2 subfamily. As to quaternary structure, tetramer of two alpha and two beta subunits. Mg(2+) is required as a cofactor.

It is found in the cytoplasm. It catalyses the reaction tRNA(Phe) + L-phenylalanine + ATP = L-phenylalanyl-tRNA(Phe) + AMP + diphosphate + H(+). The polypeptide is Phenylalanine--tRNA ligase beta subunit (Methanococcus maripaludis (strain DSM 14266 / JCM 13030 / NBRC 101832 / S2 / LL)).